Reading from the N-terminus, the 385-residue chain is Glucose-fructose oxidoreductase domain-containing protein 2 (385 aa).

An N-terminal signal peptide occupies residues 1–25 (MKMLPGVGVFGTGSSARVLVPLLRA).

It belongs to the Gfo/Idh/MocA family.

It is found in the secreted. It localises to the extracellular space. The protein localises to the extracellular matrix. In terms of biological role, promotes matrix assembly. This is Glucose-fructose oxidoreductase domain-containing protein 2 (GFOD2) from Homo sapiens (Human).